Here is a 125-residue protein sequence, read N- to C-terminus: Large ribosomal subunit protein bL12 (125 aa).

The protein belongs to the bacterial ribosomal protein bL12 family. Homodimer. Part of the ribosomal stalk of the 50S ribosomal subunit. Forms a multimeric L10(L12)X complex, where L10 forms an elongated spine to which 2 to 4 L12 dimers bind in a sequential fashion. Binds GTP-bound translation factors.

In terms of biological role, forms part of the ribosomal stalk which helps the ribosome interact with GTP-bound translation factors. Is thus essential for accurate translation. In Methylibium petroleiphilum (strain ATCC BAA-1232 / LMG 22953 / PM1), this protein is Large ribosomal subunit protein bL12.